We begin with the raw amino-acid sequence, 306 residues long: UDP-3-O-acyl-N-acetylglucosamine deacetylase (306 aa).

Zn(2+) is bound by residues H79, H239, and D243. H266 functions as the Proton donor in the catalytic mechanism.

It belongs to the LpxC family. It depends on Zn(2+) as a cofactor.

It carries out the reaction a UDP-3-O-[(3R)-3-hydroxyacyl]-N-acetyl-alpha-D-glucosamine + H2O = a UDP-3-O-[(3R)-3-hydroxyacyl]-alpha-D-glucosamine + acetate. Its pathway is glycolipid biosynthesis; lipid IV(A) biosynthesis; lipid IV(A) from (3R)-3-hydroxytetradecanoyl-[acyl-carrier-protein] and UDP-N-acetyl-alpha-D-glucosamine: step 2/6. In terms of biological role, catalyzes the hydrolysis of UDP-3-O-myristoyl-N-acetylglucosamine to form UDP-3-O-myristoylglucosamine and acetate, the committed step in lipid A biosynthesis. This is UDP-3-O-acyl-N-acetylglucosamine deacetylase from Actinobacillus pleuropneumoniae serotype 7 (strain AP76).